A 1205-amino-acid polypeptide reads, in one-letter code: Chromosome partition protein Smc (1205 aa).

32–39 (PNGSGKSN) contacts ATP. 2 coiled-coil regions span residues 169-288 (KHRK…SIQH) and 330-499 (EELE…GLQR). The SMC hinge domain maps to 514–628 (GLFGSIAQLV…VNDLTEAMGL (115 aa)). Coiled-coil stretches lie at residues 661–771 (LEVT…AQET), 802–836 (AVRTAEERANAVRGRADSLRRAAAAEREARVRAQQ), and 979–1033 (DRVT…KDLL).

The protein belongs to the SMC family. In terms of assembly, homodimer.

The protein localises to the cytoplasm. Required for chromosome condensation and partitioning. This chain is Chromosome partition protein Smc, found in Mycobacterium tuberculosis (strain ATCC 25618 / H37Rv).